Here is an 805-residue protein sequence, read N- to C-terminus: Leucine--tRNA ligase (805 aa).

The short motif at 40–51 (PYPSGSGLHVGH) is the 'HIGH' region element. The short motif at 576–580 (KMSKS) is the 'KMSKS' region element. Lysine 579 is a binding site for ATP.

This sequence belongs to the class-I aminoacyl-tRNA synthetase family.

The protein resides in the cytoplasm. It catalyses the reaction tRNA(Leu) + L-leucine + ATP = L-leucyl-tRNA(Leu) + AMP + diphosphate. This is Leucine--tRNA ligase from Chlorobium phaeovibrioides (strain DSM 265 / 1930) (Prosthecochloris vibrioformis (strain DSM 265)).